A 360-amino-acid polypeptide reads, in one-letter code: Geranylgeranyl pyrophosphate synthase 3, chloroplastic (360 aa).

Residues 1 to 39 (MATTVHLSSFSLFIQSRGRRDNSISSVKSLKKRTGLSPS) constitute a chloroplast transit peptide. The segment at 24-54 (ISSVKSLKKRTGLSPSSALTSQGGRDMIPPE) is disordered. Over residues 36-46 (LSPSSALTSQG) the composition is skewed to polar residues. Residues Lys-106, Arg-109, and His-138 each contribute to the isopentenyl diphosphate site. Positions 145 and 151 each coordinate Mg(2+). A dimethylallyl diphosphate-binding site is contributed by Arg-156. Residue Arg-157 participates in isopentenyl diphosphate binding. Dimethylallyl diphosphate contacts are provided by Lys-245, Thr-246, Gln-283, Lys-300, and Lys-310.

Belongs to the FPP/GGPP synthase family. Monomer. Requires Mg(2+) as cofactor. Mainly expressed in roots.

Its subcellular location is the plastid. The protein localises to the chloroplast. The catalysed reaction is isopentenyl diphosphate + dimethylallyl diphosphate = (2E)-geranyl diphosphate + diphosphate. The enzyme catalyses isopentenyl diphosphate + (2E)-geranyl diphosphate = (2E,6E)-farnesyl diphosphate + diphosphate. It catalyses the reaction isopentenyl diphosphate + (2E,6E)-farnesyl diphosphate = (2E,6E,10E)-geranylgeranyl diphosphate + diphosphate. The protein operates within isoprenoid biosynthesis; farnesyl diphosphate biosynthesis; farnesyl diphosphate from geranyl diphosphate and isopentenyl diphosphate: step 1/1. It participates in isoprenoid biosynthesis; geranyl diphosphate biosynthesis; geranyl diphosphate from dimethylallyl diphosphate and isopentenyl diphosphate: step 1/1. Its pathway is isoprenoid biosynthesis; geranylgeranyl diphosphate biosynthesis; geranylgeranyl diphosphate from farnesyl diphosphate and isopentenyl diphosphate: step 1/1. Catalyzes the trans-addition of the three molecules of IPP onto DMAPP to form geranylgeranyl pyrophosphate. In Arabidopsis thaliana (Mouse-ear cress), this protein is Geranylgeranyl pyrophosphate synthase 3, chloroplastic (GGPP3).